The sequence spans 350 residues: Hydroxymethylglutaryl-CoA synthase (350 aa).

(3S)-3-hydroxy-3-methylglutaryl-CoA contacts are provided by Asp-33 and Val-34. Glu-85 (proton donor/acceptor) is an active-site residue. Residues Cys-117 and Thr-158 each coordinate (3S)-3-hydroxy-3-methylglutaryl-CoA. Cys-117 functions as the Acyl-thioester intermediate in the catalytic mechanism. Arg-204 is a CoA binding site. Positions 206 and 239 each coordinate (3S)-3-hydroxy-3-methylglutaryl-CoA. Catalysis depends on His-239, which acts as the Proton donor/acceptor. Lys-244 is a CoA binding site. Lys-248, Asn-271, and Ser-301 together coordinate (3S)-3-hydroxy-3-methylglutaryl-CoA.

It belongs to the thiolase-like superfamily. Archaeal HMG-CoA synthase family. Interacts with acetoacetyl-CoA thiolase that catalyzes the precedent step in the pathway and with a DUF35 protein. The acetoacetyl-CoA thiolase/HMG-CoA synthase complex channels the intermediate via a fused CoA-binding site, which allows for efficient coupling of the endergonic thiolase reaction with the exergonic HMGCS reaction.

It carries out the reaction acetoacetyl-CoA + acetyl-CoA + H2O = (3S)-3-hydroxy-3-methylglutaryl-CoA + CoA + H(+). Its pathway is metabolic intermediate biosynthesis; (R)-mevalonate biosynthesis; (R)-mevalonate from acetyl-CoA: step 2/3. Its function is as follows. Catalyzes the condensation of acetyl-CoA with acetoacetyl-CoA to form 3-hydroxy-3-methylglutaryl-CoA (HMG-CoA). Functions in the mevalonate (MVA) pathway leading to isopentenyl diphosphate (IPP), a key precursor for the biosynthesis of isoprenoid compounds that are building blocks of archaeal membrane lipids. This is Hydroxymethylglutaryl-CoA synthase from Methanopyrus kandleri (strain AV19 / DSM 6324 / JCM 9639 / NBRC 100938).